The primary structure comprises 181 residues: NAD(P)H-quinone oxidoreductase subunit I, chloroplastic (181 aa).

2 consecutive 4Fe-4S ferredoxin-type domains span residues 52–81 and 92–121; these read GRIH…VDWE and KSYS…MTEE. [4Fe-4S] cluster is bound by residues cysteine 61, cysteine 64, cysteine 67, cysteine 71, cysteine 101, cysteine 104, cysteine 107, and cysteine 111.

The protein belongs to the complex I 23 kDa subunit family. In terms of assembly, NDH is composed of at least 16 different subunits, 5 of which are encoded in the nucleus. [4Fe-4S] cluster is required as a cofactor.

It localises to the plastid. Its subcellular location is the chloroplast thylakoid membrane. It catalyses the reaction a plastoquinone + NADH + (n+1) H(+)(in) = a plastoquinol + NAD(+) + n H(+)(out). The catalysed reaction is a plastoquinone + NADPH + (n+1) H(+)(in) = a plastoquinol + NADP(+) + n H(+)(out). In terms of biological role, NDH shuttles electrons from NAD(P)H:plastoquinone, via FMN and iron-sulfur (Fe-S) centers, to quinones in the photosynthetic chain and possibly in a chloroplast respiratory chain. The immediate electron acceptor for the enzyme in this species is believed to be plastoquinone. Couples the redox reaction to proton translocation, and thus conserves the redox energy in a proton gradient. The sequence is that of NAD(P)H-quinone oxidoreductase subunit I, chloroplastic from Zygnema circumcarinatum (Green alga).